A 359-amino-acid polypeptide reads, in one-letter code: Glycerol-3-phosphate dehydrogenase [NAD(P)+] (359 aa).

The NADPH site is built by Thr11, Trp12, Arg32, and Lys107. Lys107 and Gly138 together coordinate sn-glycerol 3-phosphate. Ala142 is a binding site for NADPH. Positions 193, 246, 256, 257, and 258 each coordinate sn-glycerol 3-phosphate. Lys193 functions as the Proton acceptor in the catalytic mechanism. Position 257 (Arg257) interacts with NADPH. The NADPH site is built by Val281 and Glu283.

The protein belongs to the NAD-dependent glycerol-3-phosphate dehydrogenase family.

It is found in the cytoplasm. It catalyses the reaction sn-glycerol 3-phosphate + NAD(+) = dihydroxyacetone phosphate + NADH + H(+). The catalysed reaction is sn-glycerol 3-phosphate + NADP(+) = dihydroxyacetone phosphate + NADPH + H(+). Its pathway is membrane lipid metabolism; glycerophospholipid metabolism. Catalyzes the reduction of the glycolytic intermediate dihydroxyacetone phosphate (DHAP) to sn-glycerol 3-phosphate (G3P), the key precursor for phospholipid synthesis. This is Glycerol-3-phosphate dehydrogenase [NAD(P)+] from Dehalococcoides mccartyi (strain CBDB1).